Reading from the N-terminus, the 359-residue chain is 5-amino-6-(D-ribitylamino)uracil--L-tyrosine 4-hydroxyphenyl transferase (359 aa).

The region spanning 45-282 (VTYVVNANIN…VYAISRIFFK (238 aa)) is the Radical SAM core domain. [4Fe-4S] cluster is bound by residues C59, C63, and C66.

The protein belongs to the radical SAM superfamily. CofH family. As to quaternary structure, consists of two subunits, CofG and CofH. The cofactor is [4Fe-4S] cluster.

It carries out the reaction 5-amino-6-(D-ribitylamino)uracil + L-tyrosine + S-adenosyl-L-methionine = 5-amino-5-(4-hydroxybenzyl)-6-(D-ribitylimino)-5,6-dihydrouracil + 2-iminoacetate + 5'-deoxyadenosine + L-methionine + H(+). It functions in the pathway cofactor biosynthesis; coenzyme F0 biosynthesis. Its function is as follows. Catalyzes the radical-mediated synthesis of 5-amino-5-(4-hydroxybenzyl)-6-(D-ribitylimino)-5,6-dihydrouracil from 5-amino-6-(D-ribitylamino)uracil and L-tyrosine. This Methanococcus maripaludis (strain C7 / ATCC BAA-1331) protein is 5-amino-6-(D-ribitylamino)uracil--L-tyrosine 4-hydroxyphenyl transferase.